The sequence spans 251 residues: Glutamate 5-kinase (251 aa).

An ATP-binding site is contributed by Lys-7. Ser-45, Asp-130, and Asn-142 together coordinate substrate. ATP contacts are provided by residues 162 to 163 (SD) and 204 to 210 (TGGIVTK).

This sequence belongs to the glutamate 5-kinase family.

The protein resides in the cytoplasm. The catalysed reaction is L-glutamate + ATP = L-glutamyl 5-phosphate + ADP. Its pathway is amino-acid biosynthesis; L-proline biosynthesis; L-glutamate 5-semialdehyde from L-glutamate: step 1/2. Its function is as follows. Catalyzes the transfer of a phosphate group to glutamate to form L-glutamate 5-phosphate. The polypeptide is Glutamate 5-kinase (Campylobacter jejuni subsp. jejuni serotype O:6 (strain 81116 / NCTC 11828)).